The chain runs to 305 residues: Sulfate adenylyltransferase subunit 2 (305 aa).

It belongs to the PAPS reductase family. CysD subfamily. In terms of assembly, heterodimer composed of CysD, the smaller subunit, and CysN.

It carries out the reaction sulfate + ATP + H(+) = adenosine 5'-phosphosulfate + diphosphate. It functions in the pathway sulfur metabolism; hydrogen sulfide biosynthesis; sulfite from sulfate: step 1/3. Functionally, with CysN forms the ATP sulfurylase (ATPS) that catalyzes the adenylation of sulfate producing adenosine 5'-phosphosulfate (APS) and diphosphate, the first enzymatic step in sulfur assimilation pathway. APS synthesis involves the formation of a high-energy phosphoric-sulfuric acid anhydride bond driven by GTP hydrolysis by CysN coupled to ATP hydrolysis by CysD. This chain is Sulfate adenylyltransferase subunit 2, found in Pseudomonas aeruginosa (strain LESB58).